The primary structure comprises 331 residues: Homeobox protein DBX1 (331 aa).

2 disordered regions span residues 56–94 (RAVP…ISSN) and 232–331 (KERE…ITVS). Positions 173–232 (GMLRRAVFSDVQRKALEKMFQKQKYISKPDRKKLAGKLGLKDSQVKIWFQNRRMKWRNSK) form a DNA-binding region, homeobox. A compositionally biased stretch (basic and acidic residues) spans 256-266 (DLSDVSKKSSG). Residues 299 to 314 (PSSPFNSSSASKPSDF) are compositionally biased toward low complexity. The span at 315-331 (SDSEEEGGEQEEEITVS) shows a compositional bias: acidic residues.

It belongs to the H2.0 homeobox family.

The protein localises to the nucleus. In terms of biological role, may function within the midpoint progenitor population to inhibit neuronal differentiation, possibly through modulating the function of Xash3. In Xenopus laevis (African clawed frog), this protein is Homeobox protein DBX1 (dbx1).